The following is a 509-amino-acid chain: Glycogen synthase (509 aa).

Lys-47 contributes to the ADP-alpha-D-glucose binding site.

It belongs to the glycosyltransferase 1 family. Bacterial/plant glycogen synthase subfamily.

It catalyses the reaction [(1-&gt;4)-alpha-D-glucosyl](n) + ADP-alpha-D-glucose = [(1-&gt;4)-alpha-D-glucosyl](n+1) + ADP + H(+). It participates in glycan biosynthesis; glycogen biosynthesis. In terms of biological role, synthesizes alpha-1,4-glucan chains using ADP-glucose. The polypeptide is Glycogen synthase (Xanthomonas oryzae pv. oryzae (strain MAFF 311018)).